We begin with the raw amino-acid sequence, 193 residues long: Large ribosomal subunit protein uL18 (193 aa).

Belongs to the universal ribosomal protein uL18 family. As to quaternary structure, part of the 50S ribosomal subunit. Contacts the 5S and 23S rRNAs.

This is one of the proteins that bind and probably mediate the attachment of the 5S RNA into the large ribosomal subunit, where it forms part of the central protuberance. This Methanosphaera stadtmanae (strain ATCC 43021 / DSM 3091 / JCM 11832 / MCB-3) protein is Large ribosomal subunit protein uL18.